A 358-amino-acid chain; its full sequence is DnaJ homolog subfamily B member 11 (358 aa).

Residues 1 to 22 (MAPQNLSTFCLLLLYLIGAVIA) form the signal peptide. Residues 25–90 (DFYKILGVPR…EKRKQYDTYG (66 aa)) form the J domain. Phosphothreonine is present on threonine 188. A glycan (N-linked (GlcNAc...) asparagine) is linked at asparagine 261.

As to quaternary structure, part of a large chaperone multiprotein complex comprising DNAJB11, HSP90B1, HSPA5, HYOU, PDIA2, PDIA4, PDIA6, PPIB, SDF2L1, UGGT1 and very small amounts of ERP29, but not, or at very low levels, CALR nor CANX. Binds to denatured substrates in an ATP-independent manner. Interacts via the J domain with HSPA5 in an ATP-dependent manner. In terms of processing, contains high-mannose Endo H-sensitive carbohydrates. Cys-169, Cys-171, Cys-193 and Cys-196 form intramolecular disulfide bonds. The preferential partner for each Cys is not known.

It is found in the endoplasmic reticulum lumen. Functionally, as a co-chaperone for HSPA5 it is required for proper folding, trafficking or degradation of proteins. Binds directly to both unfolded proteins that are substrates for ERAD and nascent unfolded peptide chains, but dissociates from the HSPA5-unfolded protein complex before folding is completed. May help recruiting HSPA5 and other chaperones to the substrate. Stimulates HSPA5 ATPase activity. It is necessary for maturation and correct trafficking of PKD1. The protein is DnaJ homolog subfamily B member 11 (Dnajb11) of Rattus norvegicus (Rat).